The sequence spans 153 residues: Superoxide dismutase [Cu-Zn] (153 aa).

Cu cation contacts are provided by His45, His47, and His62. Cysteines 56 and 145 form a disulfide. His62, His70, His79, and Asp82 together coordinate Zn(2+). Residue His119 coordinates Cu cation.

Belongs to the Cu-Zn superoxide dismutase family. In terms of assembly, homodimer. It depends on Cu cation as a cofactor. Requires Zn(2+) as cofactor.

It is found in the cytoplasm. It catalyses the reaction 2 superoxide + 2 H(+) = H2O2 + O2. Destroys radicals which are normally produced within the cells and which are toxic to biological systems. In Drosophila willistoni (Fruit fly), this protein is Superoxide dismutase [Cu-Zn].